A 275-amino-acid polypeptide reads, in one-letter code: Myb/SANT-like DNA-binding domain-containing protein 3 (275 aa).

Residues 13–78 (FSELEKSILL…QLKKCWENIK (66 aa)) enclose the Myb-like domain. Residues S96 and S98 each carry the phosphoserine modification. Residue K154 forms a Glycyl lysine isopeptide (Lys-Gly) (interchain with G-Cter in SUMO2) linkage. Positions 211–247 (QLIQMNEVHVAKIQQIERECEMAEEEHRIKMEVLNKK) form a coiled coil. S274 carries the phosphoserine modification.

It belongs to the MSANTD3 family.

This chain is Myb/SANT-like DNA-binding domain-containing protein 3 (MSANTD3), found in Bos taurus (Bovine).